The sequence spans 901 residues: Clathrin coat assembly protein AP180 (901 aa).

The 132-residue stretch at 14-145 folds into the ENTH domain; sequence QYSVTGSAVA…FSYRQMAFDF (132 aa). Disordered regions lie at residues 285 to 326, 397 to 424, 497 to 522, and 573 to 606; these read LEGK…DTSP, PISDPFAPEPSPPTTTTEPASASASTTT, PETSAPVVTPTASTAPPVPATAPSPA, and AAAPKPDAAPSIDLFGTDAFSSPPRGASPVPESS. 3 positions are modified to phosphoserine: S296, S300, and S306. A compositionally biased stretch (polar residues) spans 302 to 324; it reads LSKSSPATTVTSPNSTPAKTIDT. A glycan (O-linked (GlcNAc) threonine) is linked at T310. S313 carries the phosphoserine modification. At T317 the chain carries Phosphothreonine. Low complexity-rich tracts occupy residues 410–424 and 500–511; these read TTTTEPASASASTTT and SAPVVTPTASTA. The span at 512-522 shows a compositional bias: pro residues; sequence PPVPATAPSPA. Residues S594, S600, S621, S627, and S761 each carry the phosphoserine modification. Disordered stretches follow at residues 803–845 and 857–901; these read SAGV…GMTM and MMRP…KDFL. Low complexity predominate over residues 835-845; that stretch reads GMPPSGTGMTM. R859 is modified (asymmetric dimethylarginine; alternate). R859 bears the Omega-N-methylarginine; alternate mark. The segment covering 870 to 882 has biased composition (polar residues); it reads TQLSPSPTPATQS. Positions 887-901 are enriched in basic and acidic residues; that stretch reads PAKDPLADLNIKDFL.

The protein belongs to the PICALM/SNAP91 family. Binds AP2A2. Interacts with AP2B1; clathrin competes with SNAP91. Thr-310 can be modified by the addition of N-acetylglucosamine which can be further phosphorylated. There is no evidence for direct Thr-310 phosphorylation. Brain. Associated with the synapses.

The protein resides in the cell membrane. It is found in the membrane. The protein localises to the coated pit. Adaptins are components of the adaptor complexes which link clathrin to receptors in coated vesicles. Clathrin-associated protein complexes are believed to interact with the cytoplasmic tails of membrane proteins, leading to their selection and concentration. Binding of AP180 to clathrin triskelia induces their assembly into 60-70 nm coats. The protein is Clathrin coat assembly protein AP180 (Snap91) of Mus musculus (Mouse).